Here is a 1449-residue protein sequence, read N- to C-terminus: Actin cytoskeleton-regulatory complex protein PAN1 (1449 aa).

Composition is skewed to low complexity over residues 1-18 and 27-36; these read MYNP…QQQQ and QQQQYVQPQQ. The disordered stretch occupies residues 1 to 86; that stretch reads MYNPYQQQQA…AQQPSIQPQQ (86 aa). Over residues 49 to 86 the composition is skewed to polar residues; sequence PNQATGFYQPQQQGMFNASSFQNQPTGFAQQPSIQPQQ. Residues 128 to 217 form the EH 1 domain; the sequence is DQSKFEHLFR…EKWSNEVKSF (90 aa). Residues 161 to 196 enclose the EF-hand 1 domain; that stretch reads LQPITLAEIWSLADTNKSGSLLFPEFALALHLCNLS. 4 stretches are compositionally biased toward polar residues: residues 239–249, 258–275, 296–306, and 323–353; these read ASSGASSNPIN, TGFN…QAQP, QQATGFGSNNV, and QPQQ…NPHQ. Disordered regions lie at residues 239-366 and 386-427; these read ASSG…STGF and TTGF…GKPG. Over residues 386 to 397 the composition is skewed to low complexity; that stretch reads TTGFQPQSTGFQ. Residues 398 to 422 are compositionally biased toward polar residues; it reads PQSTGFQPQSTGFQPQQTGPLQAQP. An EH 2 domain is found at 480-569; the sequence is EKQIYDGVFS…PELVPPSTKH (90 aa). The 36-residue stretch at 513–548 folds into the EF-hand 2 domain; that stretch reads LARPDLESIWNLADTNNRGKLNKDEFAVAMHLVYRR. The segment covering 579–588 has biased composition (polar residues); it reads NSLKSGSAKS. 3 disordered regions span residues 579-638, 877-935, and 956-1418; these read NSLK…SHNS, NSSK…PEER, and LTRH…DIGA. The span at 595-606 shows a compositional bias: basic and acidic residues; it reads GKTDGKRYKNDD. Positions 878-888 are enriched in low complexity; sequence SSKPKQQSSSQ. 3 stretches are compositionally biased toward polar residues: residues 889-907, 914-926, and 959-986; these read VNST…SNNV, PQVT…STAS, and HMTS…SETS. Low complexity-rich tracts occupy residues 996-1009 and 1016-1026; these read QPEY…QQQQ and RQQSQQEAQLQ. A compositionally biased stretch (polar residues) spans 1027–1036; sequence DKGTNGQPDS. Over residues 1048-1058 the composition is skewed to acidic residues; that stretch reads MDNESDDDNEE. Residues 1050–1108 adopt a coiled-coil conformation; the sequence is NESDDDNEEYVALMKKKEEMEARERKRKLKKKQDKEARLEKLKREMEELKKKEEAGDSS. 2 stretches are compositionally biased toward basic and acidic residues: residues 1064–1073 and 1082–1104; these read KKKEEMEARE and QDKE…KEEA. Acidic residues predominate over residues 1105-1114; it reads GDSSDDEEPI. Low complexity-rich tracts occupy residues 1118-1134 and 1174-1185; these read ASYG…TTKS and NNSSTPGSNNGS. Residues 1192 to 1203 are compositionally biased toward basic and acidic residues; that stretch reads KPEKEVKLDPKK. Positions 1219-1231 are enriched in acidic residues; that stretch reads DWSDEEENSSEDE. A compositionally biased stretch (polar residues) spans 1253-1263; the sequence is VPKSSTVTPNQ. Residues 1264–1283 show a composition bias toward basic and acidic residues; the sequence is EFHDAEDIPHFDSQESKENN. The span at 1284 to 1295 shows a compositional bias: polar residues; sequence NGEYTSQPTSVI. Positions 1325–1395 are enriched in pro residues; it reads FTPPPPPPPS…PPPRGAPPLP (71 aa). The region spanning 1415 to 1432 is the WH2 domain; the sequence is DIGALLGQIKTGSSLKKV.

It belongs to the PAN1 family. As to quaternary structure, component of the PAN1 actin cytoskeleton-regulatory complex.

It is found in the cell membrane. The protein resides in the endosome membrane. The protein localises to the cytoplasm. It localises to the cytoskeleton. Its subcellular location is the actin patch. Functionally, component of the PAN1 actin cytoskeleton-regulatory complex required for the internalization of endosomes during actin-coupled endocytosis. The complex links the site of endocytosis to the cell membrane-associated actin cytoskeleton. Mediates uptake of external molecules and vacuolar degradation of plasma membrane proteins. Plays a role in the proper organization of the cell membrane-associated actin cytoskeleton and promotes its destabilization. The chain is Actin cytoskeleton-regulatory complex protein PAN1 (PAN1) from Debaryomyces hansenii (strain ATCC 36239 / CBS 767 / BCRC 21394 / JCM 1990 / NBRC 0083 / IGC 2968) (Yeast).